The sequence spans 430 residues: tRNA(Ile)-lysidine synthase (430 aa).

21–26 lines the ATP pocket; sequence SGGLDS.

This sequence belongs to the tRNA(Ile)-lysidine synthase family.

It localises to the cytoplasm. It carries out the reaction cytidine(34) in tRNA(Ile2) + L-lysine + ATP = lysidine(34) in tRNA(Ile2) + AMP + diphosphate + H(+). Functionally, ligates lysine onto the cytidine present at position 34 of the AUA codon-specific tRNA(Ile) that contains the anticodon CAU, in an ATP-dependent manner. Cytidine is converted to lysidine, thus changing the amino acid specificity of the tRNA from methionine to isoleucine. The chain is tRNA(Ile)-lysidine synthase from Salmonella agona (strain SL483).